Here is a 124-residue protein sequence, read N- to C-terminus: Small ribosomal subunit protein uS13 (124 aa).

Positions 98–124 are disordered; sequence VRGQRTRCNARTRKGPRKTVGAKRKEK.

It belongs to the universal ribosomal protein uS13 family. Part of the 30S ribosomal subunit. Forms a loose heterodimer with protein S19. Forms two bridges to the 50S subunit in the 70S ribosome.

Functionally, located at the top of the head of the 30S subunit, it contacts several helices of the 16S rRNA. In the 70S ribosome it contacts the 23S rRNA (bridge B1a) and protein L5 of the 50S subunit (bridge B1b), connecting the 2 subunits; these bridges are implicated in subunit movement. Contacts the tRNAs in the A and P-sites. The chain is Small ribosomal subunit protein uS13 from Dictyoglomus turgidum (strain DSM 6724 / Z-1310).